A 120-amino-acid polypeptide reads, in one-letter code: Large ribosomal subunit protein uL18 (120 aa).

Belongs to the universal ribosomal protein uL18 family. Part of the 50S ribosomal subunit; part of the 5S rRNA/L5/L18/L25 subcomplex. Contacts the 5S and 23S rRNAs.

Functionally, this is one of the proteins that bind and probably mediate the attachment of the 5S RNA into the large ribosomal subunit, where it forms part of the central protuberance. The protein is Large ribosomal subunit protein uL18 of Maricaulis maris (strain MCS10) (Caulobacter maris).